The following is a 282-amino-acid chain: Energy-coupling factor transporter ATP-binding protein EcfA1 (282 aa).

Residues 6–243 (ISFDHVTFTY…VEMLKRIGLD (238 aa)) enclose the ABC transporter domain. An ATP-binding site is contributed by 40–47 (GHNGSGKS).

It belongs to the ABC transporter superfamily. Energy-coupling factor EcfA family. As to quaternary structure, forms a stable energy-coupling factor (ECF) transporter complex composed of 2 membrane-embedded substrate-binding proteins (S component), 2 ATP-binding proteins (A component) and 2 transmembrane proteins (T component).

It localises to the cell membrane. ATP-binding (A) component of a common energy-coupling factor (ECF) ABC-transporter complex. Unlike classic ABC transporters this ECF transporter provides the energy necessary to transport a number of different substrates. The chain is Energy-coupling factor transporter ATP-binding protein EcfA1 from Lactobacillus delbrueckii subsp. bulgaricus (strain ATCC BAA-365 / Lb-18).